The chain runs to 460 residues: Notoamide biosynthesis cluster transcriptional coactivator notR (460 aa).

An HTH iclR-type domain is found at 74-145 (LQDLARQVEI…EPMPNYVSHT (72 aa)). A DNA-binding region (H-T-H motif) is located at residues 107–126 (IQDLADLAGVPDIQLRRVIR). Residues 300-320 (TRDFTPQPESSPRPGSASSRV) are disordered.

It is found in the nucleus. Functionally, transcription factor that probably regulates the expression of the gene cluster that mediates the biosynthesis of notoamide, a fungal indole alkaloid that belongs to a family of natural products containing a characteristic bicyclo[2.2.2]diazaoctane core. The sequence is that of Notoamide biosynthesis cluster transcriptional coactivator notR from Aspergillus sp. (strain MF297-2).